The sequence spans 116 residues: MRHKHGYRKLGRTSSHRKALLKNLAIALIEHNKIETGIYKAKELRSYIEKLTTVARVGDFNAHRHVFAYLQNKEATHKLVTEIAPKYAQRNGGYTRIQRTTFRIGDASTLATIEFV.

This sequence belongs to the bacterial ribosomal protein bL17 family. Part of the 50S ribosomal subunit. Contacts protein L32.

The protein is Large ribosomal subunit protein bL17 of Helicobacter acinonychis (strain Sheeba).